The primary structure comprises 780 residues: Nuclear cap-binding protein subunit 1 (780 aa).

The tract at residues 1–25 (MSSYRGSTRPRKRTREGENYGFRPH) is disordered. Ser-29 is modified (phosphoserine). The 216-residue stretch at 34 to 249 (AARIKKDITF…KQLILSREND (216 aa)) folds into the MIF4G domain. Residues 738–780 (ANEPVQENTSEEQEDTKMQPVDAVDEQPSENNQTAADATNEEK) form a disordered region.

The protein belongs to the NCBP1 family. Component of the nuclear cap-binding complex (CBC), a heterodimer composed of cbc1 and cbc2 that interacts with capped RNAs.

It localises to the cytoplasm. Its subcellular location is the perinuclear region. The protein localises to the nucleus. Functionally, component of the CBC complex, which binds cotranscriptionally to the 5'-cap of pre-mRNAs and is involved in maturation, export and degradation of nuclear mRNAs. This chain is Nuclear cap-binding protein subunit 1 (cbc1), found in Schizosaccharomyces pombe (strain 972 / ATCC 24843) (Fission yeast).